A 611-amino-acid polypeptide reads, in one-letter code: Threonine--tRNA ligase (611 aa).

Residues 1–25 form a disordered region; that stretch reads MAGPDRKPVSSAAATTPAPSAPVVL. Residues 9 to 24 are compositionally biased toward low complexity; that stretch reads VSSAAATTPAPSAPVV. Residues 209–502 form a catalytic region; it reads DHRRIGKDLD…MTENYAGDYP (294 aa). 3 residues coordinate Zn(2+): Cys-302, His-353, and His-479.

It belongs to the class-II aminoacyl-tRNA synthetase family. In terms of assembly, homodimer. Zn(2+) is required as a cofactor.

The protein resides in the cytoplasm. It catalyses the reaction tRNA(Thr) + L-threonine + ATP = L-threonyl-tRNA(Thr) + AMP + diphosphate + H(+). In terms of biological role, catalyzes the attachment of threonine to tRNA(Thr) in a two-step reaction: L-threonine is first activated by ATP to form Thr-AMP and then transferred to the acceptor end of tRNA(Thr). Also edits incorrectly charged L-seryl-tRNA(Thr). The sequence is that of Threonine--tRNA ligase from Parasynechococcus marenigrum (strain WH8102).